The primary structure comprises 603 residues: Elongation factor 4 (603 aa).

A tr-type G domain is found at 7-189 (SRIRNFSIIA…SIVHLVPPPQ (183 aa)). GTP is bound by residues 19–24 (DHGKST) and 136–139 (NKID).

The protein belongs to the TRAFAC class translation factor GTPase superfamily. Classic translation factor GTPase family. LepA subfamily.

It is found in the cell inner membrane. It catalyses the reaction GTP + H2O = GDP + phosphate + H(+). Functionally, required for accurate and efficient protein synthesis under certain stress conditions. May act as a fidelity factor of the translation reaction, by catalyzing a one-codon backward translocation of tRNAs on improperly translocated ribosomes. Back-translocation proceeds from a post-translocation (POST) complex to a pre-translocation (PRE) complex, thus giving elongation factor G a second chance to translocate the tRNAs correctly. Binds to ribosomes in a GTP-dependent manner. The chain is Elongation factor 4 from Rippkaea orientalis (strain PCC 8801 / RF-1) (Cyanothece sp. (strain PCC 8801)).